Here is an 813-residue protein sequence, read N- to C-terminus: G-type lectin S-receptor-like serine/threonine-protein kinase LECRK1 (813 aa).

Residues 1-19 (MVALLLFPMLLQLLSPTCA) form the signal peptide. Over 20–466 (QTQKNITLGS…NRKHWVLGSS (447 aa)) the chain is Extracellular. Residues 22–149 (QKNITLGSTL…DGTTKWQTFD (128 aa)) form the Bulb-type lectin domain. N-linked (GlcNAc...) asparagine glycans are attached at residues Asn-24, Asn-57, Asn-164, Asn-168, Asn-219, and Asn-242. The region spanning 293-346 (PQNICHAIVSDVGSGVCGFNSYCTFDGTRNQIASCQCPPWYKFFDEQKKYKGCK) is the EGF-like; atypical domain. Cystine bridges form between Cys-297–Cys-315, Cys-309–Cys-327, Cys-329–Cys-345, Cys-391–Cys-413, and Cys-395–Cys-401. The region spanning 354–433 (CDLDEATALA…NMADYVQRTV (80 aa)) is the PAN domain. N-linked (GlcNAc...) asparagine glycosylation is found at Asn-407 and Asn-441. Residues 467–487 (LILGTSILVNFALISIFLFGT) form a helical membrane-spanning segment. Topologically, residues 488 to 813 (YCRIATKKNI…DPCSFISSLP (326 aa)) are cytoplasmic. Positions 523-797 (AGFHEILGAG…KVTQMLDGAV (275 aa)) constitute a Protein kinase domain. Residues 529–537 (LGAGASGVV) and Lys-553 contribute to the ATP site. Asp-647 (proton acceptor) is an active-site residue.

This sequence belongs to the protein kinase superfamily. Ser/Thr protein kinase family.

Its subcellular location is the membrane. The catalysed reaction is L-seryl-[protein] + ATP = O-phospho-L-seryl-[protein] + ADP + H(+). It carries out the reaction L-threonyl-[protein] + ATP = O-phospho-L-threonyl-[protein] + ADP + H(+). Involved in innate immunity. Required for the expression of defense-related genes PR1A, LOX2 and CHS1 upon biotic stresses. Required for basal resistance to the fungal blast (M.grisea), bacterial blight (X.oryzae pv. oryzae, Xoo) and the herbivorous insect brown planthopper (N.lugens, BPH). May be involved in several defense signaling pathways. Involved in the promotion of seed germination. Required for the expression of alpha-amylase genes during seed germination. Involved in resistance against the herbivorous insect brown planthopper (N.lugens, BPH). Member of the BPH3 (BPH resistance locus 3) cluster which contains LECRK1, LECRK2 and LECRK3. The chain is G-type lectin S-receptor-like serine/threonine-protein kinase LECRK1 from Oryza sativa subsp. japonica (Rice).